The following is a 153-amino-acid chain: Ribosome maturation factor RimP (153 aa).

Belongs to the RimP family.

It localises to the cytoplasm. Functionally, required for maturation of 30S ribosomal subunits. The sequence is that of Ribosome maturation factor RimP from Burkholderia mallei (strain NCTC 10229).